The chain runs to 478 residues: Alpha-(1,3)-fucosyltransferase FucT (478 aa).

Residues G94, 186-189 (VASN), R195, 222-225 (VKNK), N240, and 246-250 (YVTEK) contribute to the substrate site. Residues 347–353 (DNPFIFC) form an important for acceptor specificity region. 10 tandem repeats follow at residues 364-370 (DDLRVNY), 371-377 (DDLRVNY), 378-384 (DDLRINY), 385-391 (DDLRVNY), 392-398 (DDLRINY), 399-405 (DDLRVNY), 406-412 (DDLRVNY), 413-419 (DDLRINY), 420-426 (DDLRVNY), and 427-433 (DDLRVNY). Residues 364-433 (DDLRVNYDDL…VNYDDLRVNY (70 aa)) are 10 X 7 AA tandem repeat of D-D-L-R-[IV]-N-Y. The segment at 434 to 478 (ERLLSKATPLLELSQNTTSKIYRKAYQKSLPLLRAIRRWVKKLGL) is may be involved in membrane binding.

Belongs to the glycosyltransferase 10 family. Homodimer.

The protein localises to the membrane. It localises to the cytoplasm. The catalysed reaction is a beta-D-galactosyl-(1-&gt;4)-N-acetyl-beta-D-glucosaminyl derivative + GDP-beta-L-fucose = a beta-D-galactosyl-(1-&gt;4)-[alpha-L-fucosyl-(1-&gt;3)]-N-acetyl-beta-D-glucosaminyl derivative + GDP + H(+). Its pathway is lipopolysaccharide biosynthesis; LPS oligosaccharide biosynthesis. Functionally, involved in the biosynthesis of the Lewis X (LeX) trisaccharide of the lipopolysaccharide (LPS) O-antigen. Catalyzes the addition of fucose in alpha 1-3 linkage to Gal-beta-1-4-GlcNAc-beta-O-R (LacNAc-R) type II acceptor. This Helicobacter pylori (Campylobacter pylori) protein is Alpha-(1,3)-fucosyltransferase FucT.